A 182-amino-acid chain; its full sequence is Adenylate kinase (182 aa).

Residue 12–17 participates in ATP binding; it reads GAGKGT. The interval 32 to 61 is NMP; the sequence is STGELLRKEIEMNTNLGIQVKDIMNRGELV. Residues T33, R38, 59–61, 85–88, and Q92 each bind AMP; these read ELV and GYPR. Residues 126 to 132 are LID; sequence LRGRKDD. R127 provides a ligand contact to ATP. Residues R129 and R140 each contribute to the AMP site. Residue R168 coordinates ATP.

Belongs to the adenylate kinase family. As to quaternary structure, monomer.

It localises to the cytoplasm. The catalysed reaction is AMP + ATP = 2 ADP. It functions in the pathway purine metabolism; AMP biosynthesis via salvage pathway; AMP from ADP: step 1/1. Catalyzes the reversible transfer of the terminal phosphate group between ATP and AMP. Plays an important role in cellular energy homeostasis and in adenine nucleotide metabolism. The polypeptide is Adenylate kinase (Prochlorococcus marinus (strain AS9601)).